A 368-amino-acid polypeptide reads, in one-letter code: Agmatine deiminase (368 aa).

Cys357 acts as the Amidino-cysteine intermediate in catalysis.

Belongs to the agmatine deiminase family. Homodimer.

It carries out the reaction agmatine + H2O = N-carbamoylputrescine + NH4(+). Its pathway is amine and polyamine biosynthesis; putrescine biosynthesis via agmatine pathway; N-carbamoylputrescine from agmatine: step 1/1. In terms of biological role, mediates the hydrolysis of agmatine into N-carbamoylputrescine in the arginine decarboxylase (ADC) pathway of putrescine biosynthesis, a basic polyamine. This chain is Agmatine deiminase, found in Pseudomonas aeruginosa (strain LESB58).